We begin with the raw amino-acid sequence, 402 residues long: UDP-N-acetylmuramoylalanine--D-glutamate ligase (402 aa).

Position 97-103 (97-103 (GTNGKTT)) interacts with ATP.

Belongs to the MurCDEF family.

The protein resides in the cytoplasm. It carries out the reaction UDP-N-acetyl-alpha-D-muramoyl-L-alanine + D-glutamate + ATP = UDP-N-acetyl-alpha-D-muramoyl-L-alanyl-D-glutamate + ADP + phosphate + H(+). Its pathway is cell wall biogenesis; peptidoglycan biosynthesis. Functionally, cell wall formation. Catalyzes the addition of glutamate to the nucleotide precursor UDP-N-acetylmuramoyl-L-alanine (UMA). The polypeptide is UDP-N-acetylmuramoylalanine--D-glutamate ligase (Campylobacter jejuni (strain RM1221)).